Reading from the N-terminus, the 288-residue chain is N-acetylneuraminate lyase (288 aa).

Positions 44 and 45 each coordinate aceneuramate. Tyr133 serves as the catalytic Proton donor. Lys161 functions as the Schiff-base intermediate with substrate in the catalytic mechanism. Residues Thr163, Gly185, Asp187, Glu188, and Ser204 each coordinate aceneuramate.

Belongs to the DapA family. NanA subfamily. In terms of assembly, homotetramer.

The protein resides in the cytoplasm. It catalyses the reaction aceneuramate = aldehydo-N-acetyl-D-mannosamine + pyruvate. The protein operates within amino-sugar metabolism; N-acetylneuraminate degradation; D-fructose 6-phosphate from N-acetylneuraminate: step 1/5. In terms of biological role, catalyzes the reversible aldol cleavage of N-acetylneuraminic acid (sialic acid; Neu5Ac) to form pyruvate and N-acetylmannosamine (ManNAc) via a Schiff base intermediate. This Clostridium perfringens (strain ATCC 13124 / DSM 756 / JCM 1290 / NCIMB 6125 / NCTC 8237 / Type A) protein is N-acetylneuraminate lyase.